A 261-amino-acid chain; its full sequence is Ribosomal RNA small subunit methyltransferase J (261 aa).

Residues 111–112 (RD), 127–128 (ER), 163–164 (SS), and aspartate 181 contribute to the S-adenosyl-L-methionine site.

The protein belongs to the methyltransferase superfamily. RsmJ family.

The protein localises to the cytoplasm. It carries out the reaction guanosine(1516) in 16S rRNA + S-adenosyl-L-methionine = N(2)-methylguanosine(1516) in 16S rRNA + S-adenosyl-L-homocysteine + H(+). Its function is as follows. Specifically methylates the guanosine in position 1516 of 16S rRNA. The chain is Ribosomal RNA small subunit methyltransferase J from Shewanella sp. (strain MR-7).